The primary structure comprises 63 residues: Small ribosomal subunit protein bS21 (63 aa).

This sequence belongs to the bacterial ribosomal protein bS21 family.

This Syntrophus aciditrophicus (strain SB) protein is Small ribosomal subunit protein bS21.